Consider the following 393-residue polypeptide: Formate-dependent phosphoribosylglycinamide formyltransferase (393 aa).

Residues 20–21 (EL) and Glu80 contribute to the N(1)-(5-phospho-beta-D-ribosyl)glycinamide site. ATP is bound by residues Arg112, Lys153, 158-163 (SSGKGQ), 193-196 (EAFI), and Glu201. The ATP-grasp domain maps to 117 to 306 (RLAAEDLNLP…EFELHVRAVL (190 aa)). The Mg(2+) site is built by Glu265 and Glu277. N(1)-(5-phospho-beta-D-ribosyl)glycinamide is bound by residues Asp284, Lys354, and 361–362 (RR).

Belongs to the PurK/PurT family. As to quaternary structure, homodimer.

The catalysed reaction is N(1)-(5-phospho-beta-D-ribosyl)glycinamide + formate + ATP = N(2)-formyl-N(1)-(5-phospho-beta-D-ribosyl)glycinamide + ADP + phosphate + H(+). The protein operates within purine metabolism; IMP biosynthesis via de novo pathway; N(2)-formyl-N(1)-(5-phospho-D-ribosyl)glycinamide from N(1)-(5-phospho-D-ribosyl)glycinamide (formate route): step 1/1. Functionally, involved in the de novo purine biosynthesis. Catalyzes the transfer of formate to 5-phospho-ribosyl-glycinamide (GAR), producing 5-phospho-ribosyl-N-formylglycinamide (FGAR). Formate is provided by PurU via hydrolysis of 10-formyl-tetrahydrofolate. This Syntrophotalea carbinolica (strain DSM 2380 / NBRC 103641 / GraBd1) (Pelobacter carbinolicus) protein is Formate-dependent phosphoribosylglycinamide formyltransferase.